A 397-amino-acid chain; its full sequence is Elongation factor Tu (397 aa).

The tr-type G domain occupies 10-206 (KPHVNIGTIG…AVDENVPDPE (197 aa)). A G1 region spans residues 19–26 (GHVDHGKT). A GTP-binding site is contributed by 19-26 (GHVDHGKT). T26 serves as a coordination point for Mg(2+). Positions 62–66 (GITIQ) are G2. The G3 stretch occupies residues 83-86 (DAPG). Residues 83 to 87 (DAPGH) and 138 to 141 (NKAD) contribute to the GTP site. The G4 stretch occupies residues 138 to 141 (NKAD). Positions 176-178 (SAL) are G5.

It belongs to the TRAFAC class translation factor GTPase superfamily. Classic translation factor GTPase family. EF-Tu/EF-1A subfamily. Monomer.

It localises to the cytoplasm. The catalysed reaction is GTP + H2O = GDP + phosphate + H(+). In terms of biological role, GTP hydrolase that promotes the GTP-dependent binding of aminoacyl-tRNA to the A-site of ribosomes during protein biosynthesis. The chain is Elongation factor Tu from Saccharopolyspora erythraea (strain ATCC 11635 / DSM 40517 / JCM 4748 / NBRC 13426 / NCIMB 8594 / NRRL 2338).